A 427-amino-acid chain; its full sequence is Histidinol dehydrogenase (427 aa).

3 residues coordinate NAD(+): tyrosine 123, glutamine 185, and asparagine 208. Substrate is bound by residues serine 231, glutamine 253, and histidine 256. Zn(2+) is bound by residues glutamine 253 and histidine 256. Residues glutamate 321 and histidine 322 each act as proton acceptor in the active site. Positions 322, 355, 409, and 414 each coordinate substrate. Aspartate 355 is a binding site for Zn(2+). Histidine 414 provides a ligand contact to Zn(2+).

This sequence belongs to the histidinol dehydrogenase family. Requires Zn(2+) as cofactor.

It carries out the reaction L-histidinol + 2 NAD(+) + H2O = L-histidine + 2 NADH + 3 H(+). It participates in amino-acid biosynthesis; L-histidine biosynthesis; L-histidine from 5-phospho-alpha-D-ribose 1-diphosphate: step 9/9. Functionally, catalyzes the sequential NAD-dependent oxidations of L-histidinol to L-histidinaldehyde and then to L-histidine. The polypeptide is Histidinol dehydrogenase (Oceanobacillus iheyensis (strain DSM 14371 / CIP 107618 / JCM 11309 / KCTC 3954 / HTE831)).